We begin with the raw amino-acid sequence, 207 residues long: Ribosomal RNA small subunit methyltransferase G (207 aa).

S-adenosyl-L-methionine is bound by residues Gly74, Leu79, 125 to 126 (VE), and Arg140.

This sequence belongs to the methyltransferase superfamily. RNA methyltransferase RsmG family.

The protein localises to the cytoplasm. The catalysed reaction is guanosine(527) in 16S rRNA + S-adenosyl-L-methionine = N(7)-methylguanosine(527) in 16S rRNA + S-adenosyl-L-homocysteine. Specifically methylates the N7 position of guanine in position 527 of 16S rRNA. The chain is Ribosomal RNA small subunit methyltransferase G from Shewanella piezotolerans (strain WP3 / JCM 13877).